The primary structure comprises 701 residues: MKIKKSVTYGSHQLTFETGEIARQAHAAIMVSMGDTVVLVTVVGAKSAKQGQDFFPLTVDYQERSYAAGRIPGSFFKREGRPSEKEILTSRLIDRPIRPLFPENFYNEVQVVATVLSSDNEVDADIPAMLGASAALVLSGIPFNGPIGAARIGYINGEYVLNPDTSALKQTQLNLVVAGTRQAVLMVESDAMELSEDVMLGAIVYGHQQMQVAIDAINELADEAGVTAWDWEPPARDPALAVKIAELAENDLRAAFRQKQKQVRSETIDNIWTRVFTELGVEDGEGPDAQAVKEACFALESRIVRSQILDGEPRIDGRDTRTVRPITIRTGLLPRTHGSALFTRGETQALVVATLGTGRDEQKIDALQGDYSERFMLHYNMPPYATGETGRVGTPKRREIGHGRLAKRALVAVLPSPEEFGYSLRVVSEITESNGSSSMASVCGGCLALMDAGVPLKGHVAGIAMGLIKEGNRFAVLTDILGDEDHLGDMDFKVAGTENGITALQMDIKIQGITKEILHAALVQAREGRMHILAIMRQVLPARREDISEHAPRIIKIRINPEKIRDVIGKGGAVIRALTEETGTTIDITDDGTVMIACVNAEGGELAKKRIEDITAEVEVGRVYDGTVLKLLDFGAIVSVLPGKDGLLHISQIANERVNNVGDHLKEGQVVRVKVLEADDKGRLRLSMKAVATDVADNAAT.

Mg(2+) contacts are provided by D485 and D491. The region spanning 552-611 (PRIIKIRINPEKIRDVIGKGGAVIRALTEETGTTIDITDDGTVMIACVNAEGGELAKKRI) is the KH domain. Residues 621–689 (GRVYDGTVLK…DKGRLRLSMK (69 aa)) enclose the S1 motif domain.

Belongs to the polyribonucleotide nucleotidyltransferase family. Requires Mg(2+) as cofactor.

It is found in the cytoplasm. It carries out the reaction RNA(n+1) + phosphate = RNA(n) + a ribonucleoside 5'-diphosphate. Functionally, involved in mRNA degradation. Catalyzes the phosphorolysis of single-stranded polyribonucleotides processively in the 3'- to 5'-direction. This is Polyribonucleotide nucleotidyltransferase from Nitrosospira multiformis (strain ATCC 25196 / NCIMB 11849 / C 71).